The following is a 352-amino-acid chain: Guanidino acid hydrolase, mitochondrial (352 aa).

The transit peptide at 1 to 35 (MLRLLASGCARGPGPGVGARPAAGLFHPGRRQSRQ) directs the protein to the mitochondrion. Positions 11–49 (RGPGPGVGARPAAGLFHPGRRQSRQASDAPRNQPPSPEF) are disordered. Positions 162, 185, 187, and 189 each coordinate Mn(2+). Position 193 is an N6-acetyllysine (Lys193). Residue Lys217 is modified to N6-acetyllysine; alternate. Residue Lys217 is modified to N6-succinyllysine; alternate. 2 residues coordinate Mn(2+): Asp276 and Asp278.

The protein belongs to the ureohydrolase superfamily. Arginase family. Mn(2+) is required as a cofactor. As to expression, highly expressed in liver and kidney. Also found in skeletal muscle, fetal liver, brain, testis, skin and the gastrointestinal tract. Within brain, expression is higher in the cerebral cortex with lower levels in the medulla and spinal cord.

It localises to the mitochondrion. The catalysed reaction is 3-guanidinopropanoate + H2O = urea + beta-alanine. The enzyme catalyses 4-guanidinobutanoate + H2O = urea + 4-aminobutanoate. It catalyses the reaction taurocyamine + H2O = urea + taurine. It carries out the reaction L-arginine + H2O = urea + L-ornithine. Its pathway is nitrogen metabolism; urea cycle; L-ornithine and urea from L-arginine: step 1/1. In terms of biological role, hydrolyzes linear guanidino acids to form urea and the corresponding amines. Displays specificity for substrates having a negatively charged head group and short chains including taurocyamine, guanidino propanoic and butanoic acids. May protect cells by detoxifying potentially harmful amounts of guanidino acids. Metabolizes L-arginine with low efficiency. In Homo sapiens (Human), this protein is Guanidino acid hydrolase, mitochondrial (AGMAT).